The sequence spans 142 residues: Sec-independent protein translocase protein TatB (142 aa).

Residues 1–21 form a helical membrane-spanning segment; sequence MFDFGFSELVVIGVVMLIVVG. The segment at 99–142 is disordered; the sequence is AAPPDNTTSAESQAAADPAAVDSSQQLELRLDTTPKQVVGSDKA. Over residues 107–124 the composition is skewed to low complexity; that stretch reads SAESQAAADPAAVDSSQQ.

It belongs to the TatB family. The Tat system comprises two distinct complexes: a TatABC complex, containing multiple copies of TatA, TatB and TatC subunits, and a separate TatA complex, containing only TatA subunits. Substrates initially bind to the TatABC complex, which probably triggers association of the separate TatA complex to form the active translocon.

It localises to the cell inner membrane. Its function is as follows. Part of the twin-arginine translocation (Tat) system that transports large folded proteins containing a characteristic twin-arginine motif in their signal peptide across membranes. Together with TatC, TatB is part of a receptor directly interacting with Tat signal peptides. TatB may form an oligomeric binding site that transiently accommodates folded Tat precursor proteins before their translocation. This is Sec-independent protein translocase protein TatB from Azoarcus sp. (strain BH72).